A 97-amino-acid chain; its full sequence is Coiled-coil domain-containing protein 167 (97 aa).

Positions 10 to 79 (GVALEIDGLE…LRQENRKNML (70 aa)) form a coiled coil. A helical membrane pass occupies residues 78–95 (MLLSVAIFILLTLVYAYW).

It localises to the membrane. The protein is Coiled-coil domain-containing protein 167 (CCDC167) of Homo sapiens (Human).